We begin with the raw amino-acid sequence, 479 residues long: Deoxyribodipyrimidine photo-lyase (479 aa).

In terms of domain architecture, Photolyase/cryptochrome alpha/beta spans 6-132; sequence APVIVWFRKD…TVRSFSGQLL (127 aa). Residue tyrosine 226 coordinates FAD. Arginine 230 serves as a coordination point for DNA. Residues 238–242 and 277–284 each bind FAD; these read TSLLS and EIVWREFC. Interaction with DNA regions lie at residues 277 to 284 and 343 to 344; these read EIVWREFC and NR. 374-376 is a binding site for FAD; that stretch reads DAD. Glutamine 406 serves as a coordination point for DNA.

The protein belongs to the DNA photolyase class-3 family. The cofactor is FAD. It depends on (6R)-5,10-methylene-5,6,7,8-tetrahydrofolate as a cofactor.

It carries out the reaction cyclobutadipyrimidine (in DNA) = 2 pyrimidine residues (in DNA).. In terms of biological role, photolyase involved in the repair of UV radiation-induced DNA damage. By using blue-light energy, catalyzes the photoreactivation of cyclobutane pyrimidine dimers (CPDs), which are formed between adjacent bases on the same DNA strand upon exposure to ultraviolet radiation. Can repair CPD lesions in ssDNA as well as in dsDNA. This chain is Deoxyribodipyrimidine photo-lyase, found in Agrobacterium fabrum (strain C58 / ATCC 33970) (Agrobacterium tumefaciens (strain C58)).